The sequence spans 435 residues: uncharacterized protein (435 aa).

Serine 47 is subject to Phosphoserine. Disordered stretches follow at residues 174–210 and 290–372; these read LKKKKESIKTAQTTEAQGADHNEEDEEDEEDEEDDED and KAEA…EDNK. Acidic residues predominate over residues 195–210; sequence NEEDEEDEEDEEDDED. The segment covering 290–304 has biased composition (basic and acidic residues); sequence KAEATGEAHSKDVSA. The span at 308–318 shows a compositional bias: polar residues; the sequence is SANTTTSFDET. 2 stretches are compositionally biased toward basic and acidic residues: residues 322 to 340 and 347 to 361; these read EDEKPKSEGAEEESKKEAN and VADRKEDLKSNKVND.

It localises to the cytoplasm. This is an uncharacterized protein from Saccharomyces cerevisiae (strain ATCC 204508 / S288c) (Baker's yeast).